A 295-amino-acid chain; its full sequence is CRISPR system Cmr endoribonuclease Cmr4 (295 aa).

The protein belongs to the CRISPR system Cmr4 family. In terms of assembly, forms oligomers in isolation. Part of the type III-B Cmr ribonucleoprotein (RNP) complex, an elongated RNP with Cmr2 and Cmr3 as the base, with Cmr4 and Cmr5 forming a helical core along the mature crRNA (39 or 45 nt in length), while the complex is capped by Cmr6 and Cmr1. The 5' end of the crRNA is bound to Cmr2 and Cmr3, while Cmr6 and a Cmr1 subunit (Cmr1-1 or Cmr1-2) cap the 3' end of the crRNA. The target RNA lies anti-parallel to the crRNA, with its 5' end near Cmr1 and Cmr6 and its 3' end near Cmr2 and Cmr3; major target RNA cleavage occurs nears the junction of Cmr1/Cmr6 and Cmr4/Cmr5, with minor cleavage occurring at 6 nt intervals which coincide with the proposed spacing of Cmr4 subunits. Interacts with Cmr5. Interacts with Cmr2, Cmr3, Cmr5 and Cmr6.

It is found in the cytoplasm. Its function is as follows. CRISPR (clustered regularly interspaced short palindromic repeat), is an adaptive immune system that provides protection against mobile genetic elements (viruses, transposable elements and conjugative plasmids). CRISPR clusters contain sequences complementary to antecedent mobile elements and target invading nucleic acids. CRISPR clusters are transcribed and processed into CRISPR RNA (crRNA), formerly called psiRNA (prokaryotic silencing) in this organism. Part of the Cmr ribonucleoprotein complex which has divalent cation-dependent endoribonuclease activity specific for ssRNA complementary to the crRNA (target RNA), generating 5' hydroxy- and 3' phosphate or 2'-3' cyclic phosphate termini. This is probably the subunit that cleaves the target RNA. Cmr complex does not cleave ssDNA complementary to the crRNA. Cleavage of target RNA is guided by the crRNA; substrate cleavage occurs a fixed distance (14 nt) from the 3' end of the crRNA. In vitro reconstitution shows Cmr1-2 and Cmr5 are not absolutely necessary for target cleavage. This chain is CRISPR system Cmr endoribonuclease Cmr4, found in Pyrococcus furiosus (strain ATCC 43587 / DSM 3638 / JCM 8422 / Vc1).